A 542-amino-acid polypeptide reads, in one-letter code: Beta-fructofuranosidase, insoluble isoenzyme 5 (542 aa).

Residues 50 to 53 (WQND), Gln69, Trp77, and 114 to 115 (WS) contribute to the substrate site. The active site involves Asp53. N-linked (GlcNAc...) asparagine glycosylation is present at Asn142. Residues 178–179 (RD) and Glu233 each bind substrate. Cys389 and Cys436 form a disulfide bridge. N-linked (GlcNAc...) asparagine glycosylation is found at Asn510 and Asn516.

The protein belongs to the glycosyl hydrolase 32 family. Expressed in roots and leaves.

The protein resides in the secreted. The protein localises to the extracellular space. It is found in the apoplast. It localises to the cell wall. It catalyses the reaction Hydrolysis of terminal non-reducing beta-D-fructofuranoside residues in beta-D-fructofuranosides.. In terms of biological role, may play a role in stress response. The chain is Beta-fructofuranosidase, insoluble isoenzyme 5 (CIN5) from Oryza sativa subsp. japonica (Rice).